A 432-amino-acid chain; its full sequence is Short/branched chain specific acyl-CoA dehydrogenase, mitochondrial (432 aa).

The transit peptide at 1–33 (MEGLAVRLLRGSRLLRRNFLTCLSSWKIPPHVS) directs the protein to the mitochondrion. At lysine 70 the chain carries N6-acetyllysine; alternate. Lysine 70 is modified (N6-succinyllysine; alternate). FAD is bound by residues 174 to 183 (FCLSEAGAGS) and 207 to 209 (WIS). Substrate is bound at residue serine 183. Residue serine 183 is modified to Phosphoserine. Residues tyrosine 229 and tyrosine 283 each coordinate substrate. N6-acetyllysine; alternate is present on lysine 284. Residue lysine 284 is modified to N6-succinyllysine; alternate. 291-294 (NEGR) contributes to the substrate binding site. FAD is bound by residues arginine 319, glutamine 330, and 387 to 391 (EWMGG). Glutamate 414 (proton acceptor) is an active-site residue. 416–418 (ASN) serves as a coordination point for FAD. Lysine 426 is subject to N6-acetyllysine.

The protein belongs to the acyl-CoA dehydrogenase family. In terms of assembly, homotetramer. FAD is required as a cofactor. In terms of tissue distribution, ubiquitously expressed.

Its subcellular location is the mitochondrion matrix. It carries out the reaction 2-methylbutanoyl-CoA + oxidized [electron-transfer flavoprotein] + H(+) = (2E)-2-methylbut-2-enoyl-CoA + reduced [electron-transfer flavoprotein]. It catalyses the reaction (2S)-2-methylbutanoyl-CoA + oxidized [electron-transfer flavoprotein] + H(+) = (2E)-2-methylbut-2-enoyl-CoA + reduced [electron-transfer flavoprotein]. The enzyme catalyses (2R)-2-methylbutanoyl-CoA + oxidized [electron-transfer flavoprotein] + H(+) = ethylacryloyl-CoA + reduced [electron-transfer flavoprotein]. The catalysed reaction is butanoyl-CoA + oxidized [electron-transfer flavoprotein] + H(+) = (2E)-butenoyl-CoA + reduced [electron-transfer flavoprotein]. It carries out the reaction 2-methylpropanoyl-CoA + oxidized [electron-transfer flavoprotein] + H(+) = 2-methylpropenoyl-CoA + reduced [electron-transfer flavoprotein]. It catalyses the reaction hexanoyl-CoA + oxidized [electron-transfer flavoprotein] + H(+) = (2E)-hexenoyl-CoA + reduced [electron-transfer flavoprotein]. The enzyme catalyses 2-methylhexanoyl-CoA + oxidized [electron-transfer flavoprotein] + H(+) = 2-methylhexenoyl-CoA + reduced [electron-transfer flavoprotein]. The catalysed reaction is valproyl-CoA + oxidized [electron-transfer flavoprotein] + H(+) = (2E)-2-propylpent-2-enoyl-CoA + reduced [electron-transfer flavoprotein]. It participates in lipid metabolism; mitochondrial fatty acid beta-oxidation. Its pathway is amino-acid degradation; L-isoleucine degradation. With respect to regulation, competitively inhibited by valproyl-CoA. Functionally, short and branched chain specific acyl-CoA dehydrogenase that catalyzes the removal of one hydrogen from C-2 and C-3 of the fatty acyl-CoA thioester, resulting in the formation of trans-2-enoyl-CoA. Among the different mitochondrial acyl-CoA dehydrogenases, acts specifically on short and branched chain acyl-CoA derivatives such as (S)-2-methylbutyryl-CoA as well as short straight chain acyl-CoAs such as butyryl-CoA. Plays an important role in the metabolism of L-isoleucine by catalyzing the dehydrogenation of 2-methylbutyryl-CoA, one of the steps of the L-isoleucine catabolic pathway. Can also act on valproyl-CoA, a metabolite of valproic acid, an antiepileptic drug. In Homo sapiens (Human), this protein is Short/branched chain specific acyl-CoA dehydrogenase, mitochondrial.